Consider the following 78-residue polypeptide: Large ribosomal subunit protein bL28 (78 aa).

The protein belongs to the bacterial ribosomal protein bL28 family.

In Prochlorococcus marinus (strain MIT 9515), this protein is Large ribosomal subunit protein bL28.